Reading from the N-terminus, the 457-residue chain is Argininosuccinate lyase (457 aa).

Belongs to the lyase 1 family. Argininosuccinate lyase subfamily.

The protein localises to the cytoplasm. The catalysed reaction is 2-(N(omega)-L-arginino)succinate = fumarate + L-arginine. It functions in the pathway amino-acid biosynthesis; L-arginine biosynthesis; L-arginine from L-ornithine and carbamoyl phosphate: step 3/3. The protein is Argininosuccinate lyase of Escherichia coli O139:H28 (strain E24377A / ETEC).